The chain runs to 1214 residues: Sodium bicarbonate cotransporter 3 (1214 aa).

The segment covering 1-12 (MERFRLEKKLPG) has biased composition (basic and acidic residues). 2 disordered regions span residues 1-22 (MERF…VDLG) and 52-93 (SKES…PSQR). At 1 to 608 (MERFRLEKKL…DFKDALSLQC (608 aa)) the chain is on the extracellular side. 6 positions are modified to phosphoserine: Ser52, Ser55, Ser84, Ser150, Leu165, and Cys168. Over residues 55–72 (SRRRHRHRGHKHHHRRRK) the composition is skewed to basic residues. The segment covering 73 to 85 (DKESDKEDGRESP) has biased composition (basic and acidic residues). Asn171 is a glycosylation site (N-linked (GlcNAc...) asparagine). A phosphoserine mark is found at Ser233, Ser242, Ser255, Arg258, Ser260, Thr263, Gly264, and Ala267. The N-linked (GlcNAc...) asparagine glycan is linked to Asn269. Disordered stretches follow at residues 289-346 (SRAG…IPTV), 362-408 (EEQK…ENST), and 552-572 (FHNG…HHAG). A compositionally biased stretch (pro residues) spans 303-313 (VPTPQNSPPSS). Low complexity predominate over residues 314–332 (PSISRLTSRSSQESQRQAP). Residues 379-392 (SPQSAPGNLDNSKS) show a composition bias toward polar residues. A Phosphoserine modification is found at Ser382. An N-linked (GlcNAc...) asparagine glycan is attached at Asn398. Residues Ser400 and Ser403 each carry the phosphoserine modification. N-linked (GlcNAc...) asparagine glycosylation is present at Asn406. 2 positions are modified to phosphoserine: Ser407 and Ser556. Thr557 is modified (phosphothreonine). Basic and acidic residues predominate over residues 563-572 (TPKEAAHHAG). A helical transmembrane segment spans residues 609 to 629 (LASILFLYCACMSPVITFGGL). The Cytoplasmic portion of the chain corresponds to 630–637 (LGEATEGR). A helical membrane pass occupies residues 638 to 658 (ISAIESLFGASLTGIAYSLFA). Over 659 to 695 (GQPLTILGSTGPVLVFEKILYKFCRDYQLSYLSLRTS) the chain is Extracellular. Residues 696 to 716 (IGLWTSFLCIVLVATDASSLV) form a helical membrane-spanning segment. Residues 717–725 (CYITRFTEE) lie on the Cytoplasmic side of the membrane. Residues 726 to 746 (AFAALICIIFIYEALEKLFDL) form a helical membrane-spanning segment. Lys742 carries the post-translational modification Phosphoserine. The Extracellular portion of the chain corresponds to 747–817 (GETYAFNMHN…VFLGSACGHH (71 aa)). Residues Cys766 and Cys768 are joined by a disulfide bond. Pro771 and Pro774 each carry phosphoserine. Asn776 carries an N-linked (GlcNAc...) asparagine glycan. The residue at position 780 (Ala780) is a Phosphoserine. N-linked (GlcNAc...) asparagine glycans are attached at residues Asn786 and Asn791. A disulfide bridge links Cys802 with Cys814. A helical membrane pass occupies residues 818-838 (GPYIPDVLFWCVILFFTTFFL). Topologically, residues 839–861 (SSFLKQFKTKRYFPTKVRSTISD) are cytoplasmic. Residues 862–882 (FAVFLTIVIMVTIDYLVGVPS) form a helical membrane-spanning segment. At 883–908 (PKLHVPEKFEPTHPERGWIISPLGDN) the chain is on the extracellular side. Residues 909–929 (PWWTLLIAAIPALLCTILIFM) traverse the membrane as a helical segment. Over 930-954 (DQQITAVIINRKEHKLKKGAGYHLD) the chain is Cytoplasmic. A helical membrane pass occupies residues 955–975 (LLMVGVMLGVCSVMGLPWFVA). The Extracellular segment spans residues 976–1011 (ATVLSISHVNSLKVESECSAPGEQPKFLGIREQRVT). Glu1007, Val1010, and Phe1016 each carry phosphoserine. Essential for cell membrane localization and transport activity regions lie at residues 1008–1131 (QRVT…KREL) and 1127–1214 (TKRE…ETSL). The helical transmembrane segment at 1012 to 1032 (GLMIFILMGLSVFMTSVLKFI) threads the bilayer. Residues 1033 to 1034 (PM) are Cytoplasmic-facing. The helical transmembrane segment at 1035-1055 (PVLYGVFLYMGVSSLKGIQLF) threads the bilayer. Over 1056–1092 (DRIKLFGMPAKHQPDLIYLRYVPLWKVHIFTVIQLTC) the chain is Extracellular. 8 positions are modified to phosphoserine: Tyr1073, Val1077, Ser1102, Ala1105, Val1106, Pro1109, Met1111, and Leu1115. Residues 1093–1113 (LVLLWVIKVSAAAVVFPMMVL) form a helical membrane-spanning segment. At 1114–1214 (ALVFVRKLMD…KKYVDAETSL (101 aa)) the chain is on the cytoplasmic side. Residues 1134–1136 (LDD) form a CA2-binding region. The span at 1144–1162 (KKEDDKKKKEKEEAERMLQ) shows a compositional bias: basic and acidic residues. The segment at 1144-1169 (KKEDDKKKKEKEEAERMLQDDDDTVH) is disordered. Phosphothreonine is present on Thr1167. Residues Ser1176, Ser1188, Asp1201, and Ser1213 each carry the phosphoserine modification. Positions 1211-1214 (ETSL) match the PDZ-binding motif.

This sequence belongs to the anion exchanger (TC 2.A.31) family. As to quaternary structure, interacts with CFTR through NHERF1/EBP50. Interacts with USH1C. Forms a complex with ATP6V1B1 and NHERF1/EBP50. Interacts in a pH dependent-manner with CA2/carbonic anhydrase 2. In terms of tissue distribution, highly expressed in testis and spleen. Also expressed in retina, colon, small intestine, ovary, thymus, prostate, muscle, heart and kidney. As to expression, expressed in skeletal muscle and heart muscle.

The protein localises to the basolateral cell membrane. The protein resides in the apical cell membrane. Its subcellular location is the cell projection. It localises to the stereocilium. It is found in the cell membrane. It catalyses the reaction hydrogencarbonate(in) + Na(+)(in) = hydrogencarbonate(out) + Na(+)(out). With respect to regulation, transporter activity is regulated by CA2/carbonic anhydrase 2, cAMP and PKA. Insensitive to stilbene derivatives. Inhibited by 5-(N-ethyl-N-isopropyl)-amiloride (EIPA). Electroneutral sodium- and bicarbonate-dependent cotransporter with a Na(+):HCO3(-) 1:1 stoichiometry. Mediates the sodium-dependent bicarbonate transport important for pH recovery after acid load as well as for regulation of steady-state pH in the duodenum and vascular smooth muscle cells. Plays a key role in macrophage acidification, mediating bicarbonate import into the cytoplasm which is crucial for net acid extrusion and maintenance of cytoplasmic pH during phagocytosis. Provides cellular bicarbonate for de novo purine and pyrimidine synthesis and is a key mediator of de novo nucleotide synthesis downstream of mTORC1 signaling in proliferating cells. Its function is as follows. Plays a key role in macrophage acidification, mediating bicarbonate import into the cytoplasm which is crucial for net acid extrusion and maintenance of cytoplasmic pH during phagocytosis. The sequence is that of Sodium bicarbonate cotransporter 3 (SLC4A7) from Homo sapiens (Human).